Here is a 305-residue protein sequence, read N- to C-terminus: Mycothiol acetyltransferase (305 aa).

N-acetyltransferase domains lie at 10-153 (DRLD…LVVP) and 156-305 (ISLR…YARA). Glutamate 38 is a binding site for 1D-myo-inositol 2-(L-cysteinylamino)-2-deoxy-alpha-D-glucopyranoside. 82–84 (LAV) provides a ligand contact to acetyl-CoA. Positions 183, 225, and 238 each coordinate 1D-myo-inositol 2-(L-cysteinylamino)-2-deoxy-alpha-D-glucopyranoside. Acetyl-CoA-binding positions include 242–244 (VAI) and 249–255 (QGRGLGR). Tyrosine 276 is a binding site for 1D-myo-inositol 2-(L-cysteinylamino)-2-deoxy-alpha-D-glucopyranoside. Residue 281–286 (NESALH) coordinates acetyl-CoA.

It belongs to the acetyltransferase family. MshD subfamily. In terms of assembly, monomer.

It carries out the reaction 1D-myo-inositol 2-(L-cysteinylamino)-2-deoxy-alpha-D-glucopyranoside + acetyl-CoA = mycothiol + CoA + H(+). Its function is as follows. Catalyzes the transfer of acetyl from acetyl-CoA to desacetylmycothiol (Cys-GlcN-Ins) to form mycothiol. In Rhodococcus jostii (strain RHA1), this protein is Mycothiol acetyltransferase.